The chain runs to 247 residues: DNA repair protein RecO (247 aa).

This sequence belongs to the RecO family.

Functionally, involved in DNA repair and RecF pathway recombination. The protein is DNA repair protein RecO of Brucella abortus (strain 2308).